A 210-amino-acid polypeptide reads, in one-letter code: Orotate phosphoribosyltransferase (210 aa).

Residues arginine 94, lysine 98, histidine 100, and 120-128 each bind 5-phospho-alpha-D-ribose 1-diphosphate; that span reads EDLISTGGS. Residue serine 124 participates in orotate binding.

Belongs to the purine/pyrimidine phosphoribosyltransferase family. PyrE subfamily. Homodimer. It depends on Mg(2+) as a cofactor.

The enzyme catalyses orotidine 5'-phosphate + diphosphate = orotate + 5-phospho-alpha-D-ribose 1-diphosphate. Its pathway is pyrimidine metabolism; UMP biosynthesis via de novo pathway; UMP from orotate: step 1/2. Its function is as follows. Catalyzes the transfer of a ribosyl phosphate group from 5-phosphoribose 1-diphosphate to orotate, leading to the formation of orotidine monophosphate (OMP). The chain is Orotate phosphoribosyltransferase from Bacillus mycoides (strain KBAB4) (Bacillus weihenstephanensis).